Reading from the N-terminus, the 184-residue chain is Putative lyase MJ0807 (184 aa).

Belongs to the chorismate pyruvate-lyase type 2 family.

This chain is Putative lyase MJ0807, found in Methanocaldococcus jannaschii (strain ATCC 43067 / DSM 2661 / JAL-1 / JCM 10045 / NBRC 100440) (Methanococcus jannaschii).